An 89-amino-acid polypeptide reads, in one-letter code: uncharacterized protein (89 aa).

3 helical membrane-spanning segments follow: residues 9–29 (ICNFLFQFSLEFFSISSLHSI), 35–55 (ISLSLSLFFLVAILYNIYIYL), and 65–85 (ILFAIPPLCPLCSPCFFFGTS).

Its subcellular location is the membrane. This is an uncharacterized protein from Schizosaccharomyces pombe (strain 972 / ATCC 24843) (Fission yeast).